Reading from the N-terminus, the 107-residue chain is Ribonuclease P protein component 4 (107 aa).

Cys-66, Cys-69, Cys-92, and Cys-95 together coordinate Zn(2+).

The protein belongs to the eukaryotic/archaeal RNase P protein component 4 family. Consists of a catalytic RNA component and at least 4-5 protein subunits. The cofactor is Zn(2+).

Its subcellular location is the cytoplasm. It catalyses the reaction Endonucleolytic cleavage of RNA, removing 5'-extranucleotides from tRNA precursor.. In terms of biological role, part of ribonuclease P, a protein complex that generates mature tRNA molecules by cleaving their 5'-ends. The polypeptide is Ribonuclease P protein component 4 (Methanosarcina barkeri (strain Fusaro / DSM 804)).